The following is a 184-amino-acid chain: ATP synthase subunit delta (184 aa).

This sequence belongs to the ATPase delta chain family. In terms of assembly, F-type ATPases have 2 components, F(1) - the catalytic core - and F(0) - the membrane proton channel. F(1) has five subunits: alpha(3), beta(3), gamma(1), delta(1), epsilon(1). F(0) has three main subunits: a(1), b(2) and c(10-14). The alpha and beta chains form an alternating ring which encloses part of the gamma chain. F(1) is attached to F(0) by a central stalk formed by the gamma and epsilon chains, while a peripheral stalk is formed by the delta and b chains.

The protein resides in the cell inner membrane. In terms of biological role, f(1)F(0) ATP synthase produces ATP from ADP in the presence of a proton or sodium gradient. F-type ATPases consist of two structural domains, F(1) containing the extramembraneous catalytic core and F(0) containing the membrane proton channel, linked together by a central stalk and a peripheral stalk. During catalysis, ATP synthesis in the catalytic domain of F(1) is coupled via a rotary mechanism of the central stalk subunits to proton translocation. Functionally, this protein is part of the stalk that links CF(0) to CF(1). It either transmits conformational changes from CF(0) to CF(1) or is implicated in proton conduction. In Rickettsia canadensis (strain McKiel), this protein is ATP synthase subunit delta.